A 258-amino-acid chain; its full sequence is MEVMDSCQFSPSELFYDSSCLSSPEGEFPEDFEPRELPPFGAPAPTEPACPEEEEHVRAPSGHHQAGHCLMWACKACKRKSTTMDRRKAATMRERRRLKKVNQAFETLKRCTTANPNQRLPKVEILRNAIRYIESLQELLREQVENYYHLPGQSCSEPTSPSSSCSDVMADSRSPVWPARGSSFEAGYCREMPHGYATEQSGALSSLDCLSSIVDRLSPAEEPGLPLRHAGSLSPGASIDSGPGTPGSPPPRRTYQAL.

The segment at 21-50 is disordered; it reads LSSPEGEFPEDFEPRELPPFGAPAPTEPAC. The region spanning 85 to 136 is the bHLH domain; sequence DRRKAATMRERRRLKKVNQAFETLKRCTTANPNQRLPKVEILRNAIRYIESL. Residues 220-258 form a disordered region; sequence AEEPGLPLRHAGSLSPGASIDSGPGTPGSPPPRRTYQAL.

As to quaternary structure, efficient DNA binding requires dimerization with another bHLH protein.

Its subcellular location is the nucleus. Functionally, acts as a transcriptional activator that promotes transcription of muscle-specific target genes and plays a role in muscle differentiation. Induces fibroblasts to differentiate into myoblasts. Probable sequence specific DNA-binding protein. The polypeptide is Myogenic factor 5 (MYF5) (Gallus gallus (Chicken)).